We begin with the raw amino-acid sequence, 493 residues long: 3-octaprenyl-4-hydroxybenzoate carboxy-lyase (493 aa).

Mn(2+) is bound at residue N172. Prenylated FMN is bound by residues 175–177, 189–191, and 194–195; these read IYR, RWL, and RG. E238 contributes to the Mn(2+) binding site. Catalysis depends on D287, which acts as the Proton donor.

It belongs to the UbiD family. As to quaternary structure, homohexamer. It depends on prenylated FMN as a cofactor. Mn(2+) serves as cofactor.

The protein resides in the cell membrane. It carries out the reaction a 4-hydroxy-3-(all-trans-polyprenyl)benzoate + H(+) = a 2-(all-trans-polyprenyl)phenol + CO2. It participates in cofactor biosynthesis; ubiquinone biosynthesis. In terms of biological role, catalyzes the decarboxylation of 3-octaprenyl-4-hydroxy benzoate to 2-octaprenylphenol, an intermediate step in ubiquinone biosynthesis. The chain is 3-octaprenyl-4-hydroxybenzoate carboxy-lyase from Shewanella halifaxensis (strain HAW-EB4).